Reading from the N-terminus, the 178-residue chain is SPbeta prophage-derived uncharacterized protein YonC (178 aa).

The sequence is that of SPbeta prophage-derived uncharacterized protein YonC (yonC) from Bacillus subtilis (strain 168).